The following is a 385-amino-acid chain: Na(+)/H(+) antiporter NhaA (385 aa).

The next 11 membrane-spanning stretches (helical) occupy residues 9–29, 45–65, 87–107, 114–134, 155–175, 198–218, 220–235, 245–265, 282–302, 312–332, and 345–365; these read YSAI…NVLD, IFGL…VFFF, IIPG…YLSV, GWPV…AIFG, AGIV…WIIV, TFLI…SVYQ, GIHA…IMLN, ALEP…AAMV, ILLG…IIAL, FFNL…SLLM, and QGVI…IILM.

The protein belongs to the NhaA Na(+)/H(+) (TC 2.A.33) antiporter family.

It localises to the cell membrane. It carries out the reaction Na(+)(in) + 2 H(+)(out) = Na(+)(out) + 2 H(+)(in). Na(+)/H(+) antiporter that extrudes sodium in exchange for external protons. The protein is Na(+)/H(+) antiporter NhaA of Tropheryma whipplei (strain Twist) (Whipple's bacillus).